The following is a 343-amino-acid chain: F17c-G fimbrial adhesin (343 aa).

An N-terminal signal peptide occupies residues 1 to 22 (MTNFYKVFLAVFILVCCNISHA). The tract at residues 23–199 (AVSFIGSTEN…LNPFTLNDTV (177 aa)) is receptor-binding lectin domain. A carbohydrate-binding positions include 65–66 (AN), 110–111 (DT), and 138–141 (STQG). Cysteines 75 and 132 form a disulfide. The interval 200–343 (TSCRLLTPSA…GISTFTFSYQ (144 aa)) is fimbrillin-binding domain. The segment at 287–307 (LKFGPDSPVKGNENQWQLSTG) is disordered. Residues 298 to 307 (NENQWQLSTG) show a composition bias toward polar residues.

This sequence belongs to the fimbrial protein family.

The protein localises to the fimbrium. Essential fimbrial adhesion factor that mediates binding to N-acetylglucosamine-containing receptors in the host intestinal microvilli, leading to colonization of the intestinal tissue, and diarrhea or septicemia. Also confers adhesiveness to laminin and basement membranes. The chain is F17c-G fimbrial adhesin (f17cG) from Escherichia coli.